Reading from the N-terminus, the 369-residue chain is Muscleblind-like protein 1 (369 aa).

4 consecutive C3H1-type zinc fingers follow at residues W13–K41, N47–P73, T178–D206, and D214–A240.

This sequence belongs to the muscleblind family.

The protein resides in the nucleus. It is found in the cytoplasm. Its subcellular location is the cytoplasmic granule. Involved in pre-mRNA alternative splicing regulation. Binds to CUG triplet repeat in RNA. In Gallus gallus (Chicken), this protein is Muscleblind-like protein 1 (MBNL1).